The primary structure comprises 153 residues: Ribosome maturation factor RimP (153 aa).

The protein belongs to the RimP family.

Its subcellular location is the cytoplasm. Its function is as follows. Required for maturation of 30S ribosomal subunits. The chain is Ribosome maturation factor RimP from Coxiella burnetii (strain Dugway 5J108-111).